A 145-amino-acid polypeptide reads, in one-letter code: D-aminoacyl-tRNA deacylase (145 aa).

Positions 137–138 match the Gly-cisPro motif, important for rejection of L-amino acids motif; it reads GP.

This sequence belongs to the DTD family. As to quaternary structure, homodimer.

It is found in the cytoplasm. The catalysed reaction is glycyl-tRNA(Ala) + H2O = tRNA(Ala) + glycine + H(+). It carries out the reaction a D-aminoacyl-tRNA + H2O = a tRNA + a D-alpha-amino acid + H(+). An aminoacyl-tRNA editing enzyme that deacylates mischarged D-aminoacyl-tRNAs. Also deacylates mischarged glycyl-tRNA(Ala), protecting cells against glycine mischarging by AlaRS. Acts via tRNA-based rather than protein-based catalysis; rejects L-amino acids rather than detecting D-amino acids in the active site. By recycling D-aminoacyl-tRNA to D-amino acids and free tRNA molecules, this enzyme counteracts the toxicity associated with the formation of D-aminoacyl-tRNA entities in vivo and helps enforce protein L-homochirality. In Methylacidiphilum infernorum (isolate V4) (Methylokorus infernorum (strain V4)), this protein is D-aminoacyl-tRNA deacylase.